The primary structure comprises 145 residues: D-aminoacyl-tRNA deacylase (145 aa).

The short motif at 137–138 (GP) is the Gly-cisPro motif, important for rejection of L-amino acids element.

It belongs to the DTD family. In terms of assembly, homodimer.

The protein resides in the cytoplasm. The enzyme catalyses glycyl-tRNA(Ala) + H2O = tRNA(Ala) + glycine + H(+). It catalyses the reaction a D-aminoacyl-tRNA + H2O = a tRNA + a D-alpha-amino acid + H(+). Functionally, an aminoacyl-tRNA editing enzyme that deacylates mischarged D-aminoacyl-tRNAs. Also deacylates mischarged glycyl-tRNA(Ala), protecting cells against glycine mischarging by AlaRS. Acts via tRNA-based rather than protein-based catalysis; rejects L-amino acids rather than detecting D-amino acids in the active site. By recycling D-aminoacyl-tRNA to D-amino acids and free tRNA molecules, this enzyme counteracts the toxicity associated with the formation of D-aminoacyl-tRNA entities in vivo and helps enforce protein L-homochirality. This is D-aminoacyl-tRNA deacylase from Shewanella putrefaciens (strain CN-32 / ATCC BAA-453).